A 354-amino-acid chain; its full sequence is Serum paraoxonase/lactonase 3 (354 aa).

Cys42 and Cys352 form a disulfide bridge. A glycan (N-linked (GlcNAc...) asparagine) is linked at Asn50. Residues Glu53 and Asp54 each coordinate Ca(2+). The Proton acceptor role is filled by His114. Ile116 provides a ligand contact to Ca(2+). Ser165 carries the post-translational modification Phosphoserine. Ca(2+)-binding residues include Asn167, Asn168, Asn223, Asp268, and Asn269. N-linked (GlcNAc...) asparagine glycosylation is present at Asn269.

The protein belongs to the paraoxonase family. In terms of assembly, homodimer. It depends on Ca(2+) as a cofactor. Glycosylated. Post-translationally, the signal sequence is not cleaved.

Its subcellular location is the secreted. The protein localises to the extracellular space. It carries out the reaction a phenyl acetate + H2O = a phenol + acetate + H(+). The catalysed reaction is An aryl dialkyl phosphate + H2O = dialkyl phosphate + an aryl alcohol.. The enzyme catalyses an N-acyl-L-homoserine lactone + H2O = an N-acyl-L-homoserine + H(+). Its function is as follows. Has low activity towards the organophosphate paraxon and aromatic carboxylic acid esters. Rapidly hydrolyzes lactones such as statin prodrugs (e.g. lovastatin). Hydrolyzes aromatic lactones and 5- or 6-member ring lactones with aliphatic substituents but not simple lactones or those with polar substituents. This is Serum paraoxonase/lactonase 3 (PON3) from Oryctolagus cuniculus (Rabbit).